A 450-amino-acid chain; its full sequence is Bifunctional protein GlmU (450 aa).

Positions 1–229 (MRRHAIILAA…VEEIMGVNDR (229 aa)) are pyrophosphorylase. Residues 8-11 (LAAG), K22, Q72, and 77-78 (GT) each bind UDP-N-acetyl-alpha-D-glucosamine. Position 102 (D102) interacts with Mg(2+). UDP-N-acetyl-alpha-D-glucosamine contacts are provided by G139, E154, and N227. N227 serves as a coordination point for Mg(2+). Positions 230–250 (VMLSQAENAMQRRTNHYHMLN) are linker. The N-acetyltransferase stretch occupies residues 251–450 (GVTIIDPDST…RQTTKEGYRK (200 aa)). UDP-N-acetyl-alpha-D-glucosamine-binding residues include R332 and K350. The active-site Proton acceptor is H362. UDP-N-acetyl-alpha-D-glucosamine-binding residues include Y365 and N376. Acetyl-CoA contacts are provided by residues 385-386 (NY), A422, and R439.

In the N-terminal section; belongs to the N-acetylglucosamine-1-phosphate uridyltransferase family. It in the C-terminal section; belongs to the transferase hexapeptide repeat family. As to quaternary structure, homotrimer. Requires Mg(2+) as cofactor.

The protein resides in the cytoplasm. The catalysed reaction is alpha-D-glucosamine 1-phosphate + acetyl-CoA = N-acetyl-alpha-D-glucosamine 1-phosphate + CoA + H(+). It carries out the reaction N-acetyl-alpha-D-glucosamine 1-phosphate + UTP + H(+) = UDP-N-acetyl-alpha-D-glucosamine + diphosphate. It participates in nucleotide-sugar biosynthesis; UDP-N-acetyl-alpha-D-glucosamine biosynthesis; N-acetyl-alpha-D-glucosamine 1-phosphate from alpha-D-glucosamine 6-phosphate (route II): step 2/2. It functions in the pathway nucleotide-sugar biosynthesis; UDP-N-acetyl-alpha-D-glucosamine biosynthesis; UDP-N-acetyl-alpha-D-glucosamine from N-acetyl-alpha-D-glucosamine 1-phosphate: step 1/1. Its pathway is bacterial outer membrane biogenesis; LPS lipid A biosynthesis. Its function is as follows. Catalyzes the last two sequential reactions in the de novo biosynthetic pathway for UDP-N-acetylglucosamine (UDP-GlcNAc). The C-terminal domain catalyzes the transfer of acetyl group from acetyl coenzyme A to glucosamine-1-phosphate (GlcN-1-P) to produce N-acetylglucosamine-1-phosphate (GlcNAc-1-P), which is converted into UDP-GlcNAc by the transfer of uridine 5-monophosphate (from uridine 5-triphosphate), a reaction catalyzed by the N-terminal domain. In Staphylococcus aureus (strain MRSA252), this protein is Bifunctional protein GlmU.